A 608-amino-acid chain; its full sequence is Growth hormone receptor (608 aa).

The N-terminal stretch at 1 to 16 is a signal peptide; it reads MDLRHLLFTLALVCAN. Residues 17–237 are Extracellular-facing; that stretch reads DSLSASDDLL…EFVHCAEEIE (221 aa). Cystine bridges form between C34–C44 and C72–C83. N-linked (GlcNAc...) asparagine glycosylation occurs at N86. Residues C97 and C111 are joined by a disulfide bond. Positions 122 to 226 constitute a Fibronectin type-III domain; it reads PPVHLNWTLL…ILYVSFTQAG (105 aa). N-linked (GlcNAc...) asparagine glycans are attached at residues N127, N132, and N171. Positions 211–215 match the WSXWS motif motif; the sequence is FGEFS. The chain crosses the membrane as a helical span at residues 238–261; the sequence is FPWFLVVVFGVCGLAVTAILILLS. Over 262–608 the chain is Cytoplasmic; it reads KQPRLKMLIF…STDQLNKIMP (347 aa). A required for JAK2 binding region spans residues 267 to 352; sequence KMLIFPPVPV…HLKSHSCLGA (86 aa). A Box 1 motif motif is present at residues 270–278; the sequence is IFPPVPVPK. Positions 313–322 match the UbE motif motif; the sequence is DLWVEFIELD. 2 stretches are compositionally biased toward polar residues: residues 413–426 and 438–451; these read ANTDTQQPHTSTQS and STDSANPSVQTQLS. A disordered region spans residues 413–451; it reads ANTDTQQPHTSTQSESRESWPPFADSTDSANPSVQTQLS.

This sequence belongs to the type I cytokine receptor family. Type 1 subfamily. Post-translationally, on GH binding, proteolytically cleaved, in vitro, to produce GHBP. As to expression, broad specificity.

It is found in the cell membrane. The protein localises to the secreted. Functionally, receptor for pituitary gland growth hormone (GH1) involved in regulating postnatal body growth. On ligand binding, couples to the JAK2/STAT5 pathway. In terms of biological role, the soluble form (GHBP) acts as a reservoir of growth hormone in plasma and may be a modulator/inhibitor of GH signaling. The chain is Growth hormone receptor (GHR) from Gallus gallus (Chicken).